Reading from the N-terminus, the 462-residue chain is Chitinase 1 (462 aa).

The signal sequence occupies residues 1 to 17 (MILNLIILLAISIVASA). Residues 18–291 (SNIAAYWGQN…NQLHQALSGS (274 aa)) enclose the GH18 domain. Asn-57 carries N-linked (GlcNAc...) asparagine glycosylation. Glu-147 acts as the Proton donor in catalysis.

This sequence belongs to the glycosyl hydrolase 18 family. Chitinase class V subfamily.

Its subcellular location is the secreted. It catalyses the reaction Random endo-hydrolysis of N-acetyl-beta-D-glucosaminide (1-&gt;4)-beta-linkages in chitin and chitodextrins.. Chitinase involved in the remodeling of chitin in the fungal cell wall. Plays a role in cell separation. This is Chitinase 1 (CHT1) from Candida albicans (strain SC5314 / ATCC MYA-2876) (Yeast).